A 464-amino-acid chain; its full sequence is UDP-N-acetylmuramate--L-alanine ligase (464 aa).

Residue 115–121 participates in ATP binding; the sequence is GSHGKTT.

This sequence belongs to the MurCDEF family.

The protein resides in the cytoplasm. It catalyses the reaction UDP-N-acetyl-alpha-D-muramate + L-alanine + ATP = UDP-N-acetyl-alpha-D-muramoyl-L-alanine + ADP + phosphate + H(+). It participates in cell wall biogenesis; peptidoglycan biosynthesis. Functionally, cell wall formation. In Pelagibacter ubique (strain HTCC1062), this protein is UDP-N-acetylmuramate--L-alanine ligase.